Consider the following 324-residue polypeptide: Coproporphyrin III ferrochelatase (324 aa).

Fe(2+) contacts are provided by His-184 and Glu-266.

The protein belongs to the ferrochelatase family.

Its subcellular location is the cytoplasm. It catalyses the reaction Fe-coproporphyrin III + 2 H(+) = coproporphyrin III + Fe(2+). The protein operates within porphyrin-containing compound metabolism; protoheme biosynthesis. Involved in coproporphyrin-dependent heme b biosynthesis. Catalyzes the insertion of ferrous iron into coproporphyrin III to form Fe-coproporphyrin III. In Lactiplantibacillus plantarum (strain ATCC BAA-793 / NCIMB 8826 / WCFS1) (Lactobacillus plantarum), this protein is Coproporphyrin III ferrochelatase.